The following is a 196-amino-acid chain: SERTA domain-containing protein 3 (196 aa).

Residues 1–21 (MVGGLKRKHSDLEEEEERWEW) are disordered. Residues 26 to 73 (LQSYQQALLRISLDKVQRSLGPRAPSLRRHVLIHNTLQQLQAALRLAP) enclose the SERTA domain. The disordered stretch occupies residues 104 to 125 (TSMDGTEPPQNPVTPLGLQNEV).

Interacts with RPA2. As to quaternary structure, (Microbial infection) Interacts with influenza virus PA, PB1 and PB2,leading to inhibition of RdRp complex assembly. In terms of assembly, (Microbial infection) Interacts with zika virus capsid protein.

It is found in the nucleus. Antiviral interferon-stimulated protein that plays a role in innate immunity and in the suppression of viruses through different mechanisms. Plays a role in the late phase response of TLR-induced immune effector expression. During influenza infection, interacts with PB2, PB1, and PA to disrupt the formation of the viral RdRp complex. Inhibits zika virus by interacting with the capsid protein in the nucleolus and reducing its abundance through proteasomal degradation. Strong transcriptional coactivator. In Homo sapiens (Human), this protein is SERTA domain-containing protein 3 (SERTAD3).